The following is a 272-amino-acid chain: uncharacterized protein (272 aa).

The AB hydrolase-1 domain occupies 20–133 (PVLIFIPGAN…PPINTFLPDS (114 aa)).

Belongs to the AB hydrolase superfamily.

This is an uncharacterized protein from Staphylococcus aureus (strain MSSA476).